Reading from the N-terminus, the 584-residue chain is A-type ATP synthase subunit A (584 aa).

An ATP-binding site is contributed by 233 to 240 (GPFGSGKT).

Belongs to the ATPase alpha/beta chains family. Has multiple subunits with at least A(3), B(3), C, D, E, F, H, I and proteolipid K(x).

The protein localises to the cell membrane. It carries out the reaction ATP + H2O + 4 H(+)(in) = ADP + phosphate + 5 H(+)(out). Component of the A-type ATP synthase that produces ATP from ADP in the presence of a proton gradient across the membrane. The A chain is the catalytic subunit. This is A-type ATP synthase subunit A from Methanothermobacter thermautotrophicus (strain ATCC 29096 / DSM 1053 / JCM 10044 / NBRC 100330 / Delta H) (Methanobacterium thermoautotrophicum).